The following is a 148-amino-acid chain: MSEPIKLHDLRPAAGSNKAKTRVGRGEASKGKTAGRGTKGTKARKQVSAAFEGGQMPLQMRLPKLKGFKNPNKVDYQVVNIADLAEKFPQGGDVSIADIVAAGLVRKNELVKVLGNGDISVKLNVTANKFSGSAKEKIEAAGGSATVA.

Positions 1–11 (MSEPIKLHDLR) are enriched in basic and acidic residues. Positions 1–52 (MSEPIKLHDLRPAAGSNKAKTRVGRGEASKGKTAGRGTKGTKARKQVSAAFE) are disordered.

The protein belongs to the universal ribosomal protein uL15 family. As to quaternary structure, part of the 50S ribosomal subunit.

Functionally, binds to the 23S rRNA. The polypeptide is Large ribosomal subunit protein uL15 (Corynebacterium glutamicum (strain R)).